A 492-amino-acid chain; its full sequence is Pentatricopeptide repeat-containing protein At4g21705, mitochondrial (492 aa).

A mitochondrion-targeting transit peptide spans 1–17 (MNILRRIPANLIASRYY). PPR repeat units follow at residues 125–159 (NDKT…GFVT), 160–194 (SSLT…NVAP), 195–225 (DNYS…MERR), 231–261 (DWNT…SENR), 266–296 (DGEG…EKDV), 301–335 (INQD…GNCY), 336–370 (DFRV…GKAT), and 371–405 (TPES…EVGS).

It belongs to the PPR family. P subfamily.

Its subcellular location is the mitochondrion. The polypeptide is Pentatricopeptide repeat-containing protein At4g21705, mitochondrial (Arabidopsis thaliana (Mouse-ear cress)).